The sequence spans 362 residues: Dihydroorotate dehydrogenase (quinone) (362 aa).

FMN contacts are provided by residues 62–66 (AGYDK) and Thr86. Residue Lys66 participates in substrate binding. Position 111–115 (111–115 (NRLGF)) interacts with substrate. Asn139 and Asn170 together coordinate FMN. Asn170 provides a ligand contact to substrate. Ser173 serves as the catalytic Nucleophile. Asn175 serves as a coordination point for substrate. Positions 215 and 243 each coordinate FMN. 244–245 (NT) provides a ligand contact to substrate. Residues Gly266, Gly295, and 316 to 317 (YS) each bind FMN.

Belongs to the dihydroorotate dehydrogenase family. Type 2 subfamily. In terms of assembly, monomer. FMN serves as cofactor.

The protein resides in the cell membrane. It carries out the reaction (S)-dihydroorotate + a quinone = orotate + a quinol. It participates in pyrimidine metabolism; UMP biosynthesis via de novo pathway; orotate from (S)-dihydroorotate (quinone route): step 1/1. Functionally, catalyzes the conversion of dihydroorotate to orotate with quinone as electron acceptor. This is Dihydroorotate dehydrogenase (quinone) from Rhizobium etli (strain CIAT 652).